The sequence spans 109 residues: uncharacterized protein (109 aa).

The helical transmembrane segment at 78-98 (YTCIMYIGLLCMFVLLYMTVI) threads the bilayer.

The protein resides in the membrane. This is an uncharacterized protein from Saccharomyces cerevisiae (strain ATCC 204508 / S288c) (Baker's yeast).